The chain runs to 336 residues: Zinc finger protein GFI1 homolog pag-3 (336 aa).

C2H2-type zinc fingers lie at residues Phe126–His148, Phe154–His176, Tyr182–His204, His210–His232, and Phe238–His260. The interval Arg253 to Asn290 is disordered.

May interact with transcription factor unc-3. In terms of tissue distribution, expressed in the BDU neurons, the touch neurons, the VA, VB and VC motor neurons, two AVF interneurons and unidentified neurons of the retrovesicular ganglion (at protein level).

The protein localises to the nucleus. The protein resides in the cell projection. It is found in the axon. Its subcellular location is the perikaryon. In terms of biological role, transcription factor. Plays a role in the determination of neuroblast cell fate and neuronal differentiation. Negatively modulates expression of several components of dense-core vesicles (DCVs), thereby, in a DCV membrane protein ida-1-dependent manner, regulating neurosecretion. Negatively modulates the transcription of its own gene, the mechanosensory gene mec-3, and also other touch neuron-specific genes in the BDU neurons; required for coordinated movement. Required to determine the identity of BDU sensory neurons in concert with transcription factor unc-86, regulating expression of a number of genes, including transcription factors ceh-14 and ahr-1, neuropeptides flp-10, nlp-1 and nlp-15, and tyramine receptor-encoding ser-2. Acts in concert with non-canonical WNT signaling to negatively modulate transcription of mec-3 gene in BDU neurons. May act in concert with transcription factor unc-3 in motor neuron fate determination. May play a role programmed cell death. In Caenorhabditis elegans, this protein is Zinc finger protein GFI1 homolog pag-3.